The sequence spans 700 residues: Methionine--tRNA ligase (700 aa).

Residues 13–23 (PYANGDIHLGH) carry the 'HIGH' region motif. Residues cysteine 144, cysteine 147, cysteine 157, and cysteine 160 each coordinate Zn(2+). A 'KMSKS' region motif is present at residues 341-345 (KMSKS). Lysine 344 provides a ligand contact to ATP. The tRNA-binding domain occupies 598-700 (DFAKVEMKVA…DNCVIGDLLA (103 aa)).

The protein belongs to the class-I aminoacyl-tRNA synthetase family. MetG type 1 subfamily. Homodimer. Zn(2+) serves as cofactor.

It is found in the cytoplasm. It catalyses the reaction tRNA(Met) + L-methionine + ATP = L-methionyl-tRNA(Met) + AMP + diphosphate. Its function is as follows. Is required not only for elongation of protein synthesis but also for the initiation of all mRNA translation through initiator tRNA(fMet) aminoacylation. This chain is Methionine--tRNA ligase, found in Psychrobacter arcticus (strain DSM 17307 / VKM B-2377 / 273-4).